Here is a 289-residue protein sequence, read N- to C-terminus: 4-hydroxy-tetrahydrodipicolinate synthase (289 aa).

A pyruvate-binding site is contributed by threonine 43. Tyrosine 131 (proton donor/acceptor) is an active-site residue. Lysine 160 acts as the Schiff-base intermediate with substrate in catalysis. Valine 200 serves as a coordination point for pyruvate.

This sequence belongs to the DapA family. In terms of assembly, homotetramer; dimer of dimers.

It is found in the cytoplasm. The enzyme catalyses L-aspartate 4-semialdehyde + pyruvate = (2S,4S)-4-hydroxy-2,3,4,5-tetrahydrodipicolinate + H2O + H(+). It participates in amino-acid biosynthesis; L-lysine biosynthesis via DAP pathway; (S)-tetrahydrodipicolinate from L-aspartate: step 3/4. Functionally, catalyzes the condensation of (S)-aspartate-beta-semialdehyde [(S)-ASA] and pyruvate to 4-hydroxy-tetrahydrodipicolinate (HTPA). This is 4-hydroxy-tetrahydrodipicolinate synthase from Methanococcus maripaludis (strain C5 / ATCC BAA-1333).